The sequence spans 236 residues: 2-C-methyl-D-erythritol 4-phosphate cytidylyltransferase (236 aa).

This sequence belongs to the IspD/TarI cytidylyltransferase family. IspD subfamily. As to quaternary structure, homodimer.

It catalyses the reaction 2-C-methyl-D-erythritol 4-phosphate + CTP + H(+) = 4-CDP-2-C-methyl-D-erythritol + diphosphate. It functions in the pathway isoprenoid biosynthesis; isopentenyl diphosphate biosynthesis via DXP pathway; isopentenyl diphosphate from 1-deoxy-D-xylulose 5-phosphate: step 2/6. Catalyzes the formation of 4-diphosphocytidyl-2-C-methyl-D-erythritol from CTP and 2-C-methyl-D-erythritol 4-phosphate (MEP). This is 2-C-methyl-D-erythritol 4-phosphate cytidylyltransferase from Salmonella paratyphi A (strain ATCC 9150 / SARB42).